The sequence spans 491 residues: MAGRGGELTEALVKKTGREEEDELGMKEKVWIESKKLWVVAAPAIFTRYSTFGVSMVTQAFIGHLGPTELAAYSITFTILLRFSNGILLGMAGALGTLCGQAYGAKQYQMLGIYLQRSWIVLTGGTICLMPVFIFAGPILLALGQEERIVRVARVLALWVIGINFSFVPSFTCQMFLQAQSKNKIISYVTAVSLGLHVFFSWLLVAHFNFGITGAMTSMLIAFWLPIIVQLLYVTCGGCKDTWRGFSMLAFKDLWPVLKLSLSSGGMLCLELWYNSVLVLLTGNLKNAEVALDALAICISINALEMMIALGFLAAVSVRVSNELGSGNPKGAKFATLIAVFTSLSIGIVLFFVFLFLRGRISYIFTTSEAVAAEVADLSPLLAFSILLNSVQPVLSGVAIGAGWQGYVAYVNLACYYLVGIPIGVILGYVVGLQVKGVWIGMLFGIFVQTCVLTVMTLRTDWDQQVSTSLRNINRWVVPESRDANQISSEE.

12 helical membrane passes run 37–57, 75–95, 120–140, 156–176, 185–205, 214–234, 265–285, 296–316, 337–357, 381–401, 413–433, and 438–458; these read LWVV…VSMV, ITFT…AGAL, IVLT…GPIL, LALW…CQMF, IISY…WLLV, GAMT…LLYV, GGML…TGNL, AICI…LAAV, LIAV…FLFL, LLAF…VAIG, LACY…VVGL, and VWIG…VMTL.

Belongs to the multi antimicrobial extrusion (MATE) (TC 2.A.66.1) family.

It is found in the membrane. This is Protein DETOXIFICATION 20 from Arabidopsis thaliana (Mouse-ear cress).